The chain runs to 277 residues: Short chain dehydrogenase penD (277 aa).

Positions 28, 76, and 105 each coordinate NADP(+). Catalysis depends on proton donor residues S158 and S159. Y173, K177, and T209 together coordinate NADP(+). Catalysis depends on Y173, which acts as the Proton acceptor. K177 acts as the Lowers pKa of active site Tyr in catalysis.

The protein belongs to the short-chain dehydrogenases/reductases (SDR) family.

It carries out the reaction yaequinolone D + NADPH + H(+) = penigequinolone A + NADP(+) + H2O. It catalyses the reaction yaequinolone D + NADPH + H(+) = penigequinolone B + NADP(+) + H2O. It participates in secondary metabolite biosynthesis. Its pathway is alkaloid biosynthesis. It functions in the pathway mycotoxin biosynthesis. Its function is as follows. Short chain dehydrogenase; part of the gene cluster that mediates the biosynthesis of penigequinolones, potent insecticidal alkaloids that contain a highly modified 10-carbon prenyl group. The first stage is catalyzed by the nonribosomal peptide synthetase penN that condenses anthranilic acid and O-methyl-L-tyrosine to produce 4'-methoxycyclopeptin. 4'-methoxycyclopeptin is then converted to 4'-methoxydehydrocyclopeptin by the ketoglutarate-dependent dioxygenase penM through dehydrogenation to form a double bond between C-alpha and C-beta of the O-methyltyrosine side chain. PenM also converts its first product methoxydehydrocyclopeptin to 4'-methoxycyclopenin. The following conversion of 4'methoxycyclopenin into 4'-methoxyviridicatin is catalyzed by the cyclopenase penL. 4'-methoxyviridicatin is the precursor of quinolone natural products, and is further converted to quinolinone B. The prenyltransferase penI then catalyzes the canonical Friedel-Crafts alkylation of quinolinone B with dimethylallyl cation to yield dimethylallyl quinolone, which is subjected to FAD-dependent dehydrogenation by the FAD-linked oxidoreductase penH to yield conjugated aryl diene. The delta(3') double bond then serves as the site of the second alkylation with DMAPP catalyzed by the prenyltransferase penG to yield a carbenium ion intermediate, which can be attacked by H(2)O to yield a styrenyl quinolone containing a C3'-hydroxyprenyl chain, or undergo cyclization to yield yaequinolones J1 and J2. The conversion of the styrenyl quinolone into the tetrahydrofuran-containing yaequinolone C is performed by the FAD-dependent monooxygenase penE and involves epoxidation of the terminal C7'-C8' olefin, followed by epoxide ring opening initiated by the C3' hydroxyl group. The predicted cysteine hydrolase penJ acts as an epoxide hydrolase that enhances the rate of the 5-exo-tet cyclization step, increasing the yield of yaequinolone C. PenF catalyzes the cationic rearrangement of the epoxide formed by penE (before ring opening to produce yaequinolone C) into yaequinolone D. Finally, the short-chain dehydrogenase/reductase (SDR)-like reductase penD, catalyzes both the dehydration of yaequinolone D and the reduction of the resulting oxonium to yield penigequinolone. The protein is Short chain dehydrogenase penD of Penicillium thymicola.